We begin with the raw amino-acid sequence, 154 residues long: SsrA-binding protein (154 aa).

Residues Lys-132–Glu-154 form a disordered region.

This sequence belongs to the SmpB family.

It is found in the cytoplasm. Functionally, required for rescue of stalled ribosomes mediated by trans-translation. Binds to transfer-messenger RNA (tmRNA), required for stable association of tmRNA with ribosomes. tmRNA and SmpB together mimic tRNA shape, replacing the anticodon stem-loop with SmpB. tmRNA is encoded by the ssrA gene; the 2 termini fold to resemble tRNA(Ala) and it encodes a 'tag peptide', a short internal open reading frame. During trans-translation Ala-aminoacylated tmRNA acts like a tRNA, entering the A-site of stalled ribosomes, displacing the stalled mRNA. The ribosome then switches to translate the ORF on the tmRNA; the nascent peptide is terminated with the 'tag peptide' encoded by the tmRNA and targeted for degradation. The ribosome is freed to recommence translation, which seems to be the essential function of trans-translation. This Acaryochloris marina (strain MBIC 11017) protein is SsrA-binding protein.